The primary structure comprises 215 residues: Probable nicotinate-nucleotide adenylyltransferase (215 aa).

Belongs to the NadD family.

The enzyme catalyses nicotinate beta-D-ribonucleotide + ATP + H(+) = deamido-NAD(+) + diphosphate. Its pathway is cofactor biosynthesis; NAD(+) biosynthesis; deamido-NAD(+) from nicotinate D-ribonucleotide: step 1/1. In terms of biological role, catalyzes the reversible adenylation of nicotinate mononucleotide (NaMN) to nicotinic acid adenine dinucleotide (NaAD). The protein is Probable nicotinate-nucleotide adenylyltransferase of Shewanella putrefaciens (strain CN-32 / ATCC BAA-453).